The sequence spans 312 residues: DNA-directed RNA polymerase subunit alpha (312 aa).

The alpha N-terminal domain (alpha-NTD) stretch occupies residues 1–229 (MLQYQIDRIE…ELFQPLATVT (229 aa)). Positions 245 to 312 (QIPLEELNLS…ISIPQSRTSA (68 aa)) are alpha C-terminal domain (alpha-CTD).

It belongs to the RNA polymerase alpha chain family. As to quaternary structure, in cyanobacteria the RNAP catalytic core is composed of 2 alpha, 1 beta, 1 beta', 1 gamma and 1 omega subunit. When a sigma factor is associated with the core the holoenzyme is formed, which can initiate transcription.

The enzyme catalyses RNA(n) + a ribonucleoside 5'-triphosphate = RNA(n+1) + diphosphate. In terms of biological role, DNA-dependent RNA polymerase catalyzes the transcription of DNA into RNA using the four ribonucleoside triphosphates as substrates. The sequence is that of DNA-directed RNA polymerase subunit alpha from Prochlorococcus marinus (strain MIT 9313).